Reading from the N-terminus, the 257-residue chain is Pyridoxine 5'-phosphate synthase (257 aa).

Asn6 is a 3-amino-2-oxopropyl phosphate binding site. 8-9 lines the 1-deoxy-D-xylulose 5-phosphate pocket; the sequence is DH. A 3-amino-2-oxopropyl phosphate-binding site is contributed by Arg17. Catalysis depends on His41, which acts as the Proton acceptor. Positions 43 and 48 each coordinate 1-deoxy-D-xylulose 5-phosphate. Glu68 serves as the catalytic Proton acceptor. Thr98 contributes to the 1-deoxy-D-xylulose 5-phosphate binding site. The active-site Proton donor is His210. Residues Gly211 and 232–233 each bind 3-amino-2-oxopropyl phosphate; that span reads GQ.

The protein belongs to the PNP synthase family. Homooctamer; tetramer of dimers.

The protein resides in the cytoplasm. The catalysed reaction is 3-amino-2-oxopropyl phosphate + 1-deoxy-D-xylulose 5-phosphate = pyridoxine 5'-phosphate + phosphate + 2 H2O + H(+). Its pathway is cofactor biosynthesis; pyridoxine 5'-phosphate biosynthesis; pyridoxine 5'-phosphate from D-erythrose 4-phosphate: step 5/5. Functionally, catalyzes the complicated ring closure reaction between the two acyclic compounds 1-deoxy-D-xylulose-5-phosphate (DXP) and 3-amino-2-oxopropyl phosphate (1-amino-acetone-3-phosphate or AAP) to form pyridoxine 5'-phosphate (PNP) and inorganic phosphate. The protein is Pyridoxine 5'-phosphate synthase of Campylobacter jejuni subsp. doylei (strain ATCC BAA-1458 / RM4099 / 269.97).